Consider the following 316-residue polypeptide: Transaldolase (316 aa).

Lys-125 acts as the Schiff-base intermediate with substrate in catalysis.

This sequence belongs to the transaldolase family. Type 1 subfamily. As to quaternary structure, homodimer.

The protein resides in the cytoplasm. It carries out the reaction D-sedoheptulose 7-phosphate + D-glyceraldehyde 3-phosphate = D-erythrose 4-phosphate + beta-D-fructose 6-phosphate. It functions in the pathway carbohydrate degradation; pentose phosphate pathway; D-glyceraldehyde 3-phosphate and beta-D-fructose 6-phosphate from D-ribose 5-phosphate and D-xylulose 5-phosphate (non-oxidative stage): step 2/3. Transaldolase is important for the balance of metabolites in the pentose-phosphate pathway. This chain is Transaldolase, found in Verminephrobacter eiseniae (strain EF01-2).